The sequence spans 354 residues: Probable L-ascorbate-6-phosphate lactonase UlaG (354 aa).

Belongs to the UlaG family. A divalent metal cation serves as cofactor.

It is found in the cytoplasm. It catalyses the reaction L-ascorbate 6-phosphate + H2O = 3-dehydro-L-gulonate 6-phosphate. Its pathway is cofactor degradation; L-ascorbate degradation; D-xylulose 5-phosphate from L-ascorbate: step 1/4. In terms of biological role, probably catalyzes the hydrolysis of L-ascorbate-6-P into 3-keto-L-gulonate-6-P. Is essential for L-ascorbate utilization under anaerobic conditions. The sequence is that of Probable L-ascorbate-6-phosphate lactonase UlaG from Escherichia fergusonii (strain ATCC 35469 / DSM 13698 / CCUG 18766 / IAM 14443 / JCM 21226 / LMG 7866 / NBRC 102419 / NCTC 12128 / CDC 0568-73).